The chain runs to 104 residues: Nucleoid-associated protein GAU_1113 (104 aa).

Belongs to the YbaB/EbfC family. As to quaternary structure, homodimer.

It is found in the cytoplasm. The protein resides in the nucleoid. In terms of biological role, binds to DNA and alters its conformation. May be involved in regulation of gene expression, nucleoid organization and DNA protection. The sequence is that of Nucleoid-associated protein GAU_1113 from Gemmatimonas aurantiaca (strain DSM 14586 / JCM 11422 / NBRC 100505 / T-27).